A 162-amino-acid chain; its full sequence is Transcription elongation factor GreB (162 aa).

The stretch at 52–76 (GKRRLREIDRRIRFLSKRLEALQII) forms a coiled coil.

Belongs to the GreA/GreB family. GreB subfamily.

Its function is as follows. Necessary for efficient RNA polymerase transcription elongation past template-encoded arresting sites. The arresting sites in DNA have the property of trapping a certain fraction of elongating RNA polymerases that pass through, resulting in locked ternary complexes. Cleavage of the nascent transcript by cleavage factors such as GreA or GreB allows the resumption of elongation from the new 3'terminus. GreB releases sequences of up to 9 nucleotides in length. The chain is Transcription elongation factor GreB from Haemophilus ducreyi (strain 35000HP / ATCC 700724).